The sequence spans 225 residues: 2-C-methyl-D-erythritol 4-phosphate cytidylyltransferase (225 aa).

The protein belongs to the IspD/TarI cytidylyltransferase family. IspD subfamily.

The enzyme catalyses 2-C-methyl-D-erythritol 4-phosphate + CTP + H(+) = 4-CDP-2-C-methyl-D-erythritol + diphosphate. It functions in the pathway isoprenoid biosynthesis; isopentenyl diphosphate biosynthesis via DXP pathway; isopentenyl diphosphate from 1-deoxy-D-xylulose 5-phosphate: step 2/6. Catalyzes the formation of 4-diphosphocytidyl-2-C-methyl-D-erythritol from CTP and 2-C-methyl-D-erythritol 4-phosphate (MEP). The protein is 2-C-methyl-D-erythritol 4-phosphate cytidylyltransferase of Clostridium perfringens (strain ATCC 13124 / DSM 756 / JCM 1290 / NCIMB 6125 / NCTC 8237 / Type A).